A 315-amino-acid chain; its full sequence is tRNA pseudouridine synthase B (315 aa).

The active-site Nucleophile is aspartate 54.

This sequence belongs to the pseudouridine synthase TruB family. Type 1 subfamily.

The enzyme catalyses uridine(55) in tRNA = pseudouridine(55) in tRNA. Its function is as follows. Responsible for synthesis of pseudouridine from uracil-55 in the psi GC loop of transfer RNAs. This chain is tRNA pseudouridine synthase B, found in Cupriavidus pinatubonensis (strain JMP 134 / LMG 1197) (Cupriavidus necator (strain JMP 134)).